Consider the following 448-residue polypeptide: Fibulin-5 (448 aa).

Positions 1 to 23 (MPGLKRILTVTILALWLPHPGNA) are cleaved as a signal peptide. An EGF-like 1; calcium-binding domain is found at 42-82 (DIDECRTIPEACRGDMMCVNQNGGYLCIPRTNPVYRGPYSN). 17 cysteine pairs are disulfide-bonded: cysteine 46–cysteine 59, cysteine 53–cysteine 68, cysteine 131–cysteine 144, cysteine 138–cysteine 153, cysteine 155–cysteine 166, cysteine 172–cysteine 181, cysteine 177–cysteine 190, cysteine 192–cysteine 205, cysteine 211–cysteine 221, cysteine 217–cysteine 230, cysteine 232–cysteine 245, cysteine 251–cysteine 262, cysteine 258–cysteine 271, cysteine 273–cysteine 286, cysteine 292–cysteine 305, cysteine 299–cysteine 314, and cysteine 320–cysteine 332. The Cell attachment site motif lies at 54–56 (RGD). In terms of domain architecture, EGF-like 2; calcium-binding spans 127–167 (DVDECATDSHQCNPTQICINTEGGYTCSCTDGYWLLEGQCL). Residues 168 to 206 (DIDECRYGYCQQLCANVPGSYSCTCNPGFTLNDDGRSCQ) enclose the EGF-like 3; calcium-binding domain. The EGF-like 4; calcium-binding domain maps to 207-246 (DVNECETENPCVQTCVNTYGSFICRCDPGYELEEDGIHCS). Positions 245 to 448 (CSDMDECSFS…LRIYVSQYPF (204 aa)) are interaction with LOXL1. Positions 247 to 287 (DMDECSFSEFLCQHECVNQPGSYFCSCPPGYVLLDDNRSCQ) constitute an EGF-like 5; calcium-binding domain. N-linked (GlcNAc...) asparagine glycans are attached at residues asparagine 283 and asparagine 296. Positions 288–333 (DINECEHRNHTCTSLQTCYNLQGGFKCIDPISCEEPYLLIGENRCM) constitute an EGF-like 6; calcium-binding domain.

Belongs to the fibulin family. In terms of assembly, homodimer. Monomer, homodimerizes in presence of Ca(2+). Interacts with ELN. Interacts (via N-terminus) with the integrins ITGAV/ITGB3, ITGAV/ITGB5 and ITGA9/ITGB1. Interacts with FBN1 (via N-terminal domain). Forms a ternary complex with ELN and FBN1. Interacts with EFEMP2 with moderate affinity. Interacts with LOXL1. N-glycosylated.

It localises to the secreted. Its subcellular location is the extracellular space. The protein resides in the extracellular matrix. In terms of biological role, essential for elastic fiber formation, is involved in the assembly of continuous elastin (ELN) polymer and promotes the interaction of microfibrils and ELN. Stabilizes and organizes elastic fibers in the skin, lung and vasculature. Promotes adhesion of endothelial cells through interaction of integrins and the RGD motif. Vascular ligand for integrin receptors which may play a role in vascular development and remodeling. May act as an adapter that mediates the interaction between FBN1 and ELN. The protein is Fibulin-5 (Fbln5) of Mus musculus (Mouse).